The sequence spans 607 residues: Elongation factor 4 (607 aa).

The tr-type G domain maps to 6 to 188 (DRIRNFSIIA…AIVARIPAPK (183 aa)). GTP-binding positions include 18 to 23 (DHGKST) and 135 to 138 (NKID).

Belongs to the TRAFAC class translation factor GTPase superfamily. Classic translation factor GTPase family. LepA subfamily.

It is found in the cell inner membrane. The catalysed reaction is GTP + H2O = GDP + phosphate + H(+). Its function is as follows. Required for accurate and efficient protein synthesis under certain stress conditions. May act as a fidelity factor of the translation reaction, by catalyzing a one-codon backward translocation of tRNAs on improperly translocated ribosomes. Back-translocation proceeds from a post-translocation (POST) complex to a pre-translocation (PRE) complex, thus giving elongation factor G a second chance to translocate the tRNAs correctly. Binds to ribosomes in a GTP-dependent manner. In Rhizorhabdus wittichii (strain DSM 6014 / CCUG 31198 / JCM 15750 / NBRC 105917 / EY 4224 / RW1) (Sphingomonas wittichii), this protein is Elongation factor 4.